The chain runs to 424 residues: Phosphoribosylamine--glycine ligase (424 aa).

In terms of domain architecture, ATP-grasp spans 111–312 (KAFVKECGIK…LLDLCLATAK (202 aa)). 137 to 189 (IQNASFPLVIKALNKNTSIVYQEEEAIKILEDAFKQSNEPVIIEPFLEGFELS) serves as a coordination point for ATP.

This sequence belongs to the GARS family.

It catalyses the reaction 5-phospho-beta-D-ribosylamine + glycine + ATP = N(1)-(5-phospho-beta-D-ribosyl)glycinamide + ADP + phosphate + H(+). It participates in purine metabolism; IMP biosynthesis via de novo pathway; N(1)-(5-phospho-D-ribosyl)glycinamide from 5-phospho-alpha-D-ribose 1-diphosphate: step 2/2. This is Phosphoribosylamine--glycine ligase (purD) from Helicobacter pylori (strain ATCC 700392 / 26695) (Campylobacter pylori).